The primary structure comprises 521 residues: Probable inorganic phosphate transporter 1-3 (521 aa).

The Cytoplasmic portion of the chain corresponds to 1–24 (MADQQLGVLKALDVAKTQLYHFTA). The helical transmembrane segment at 25–45 (IVIAGMGFFTDAYDLFCVSLV) threads the bilayer. The Extracellular portion of the chain corresponds to 46–70 (TKLLGRLYYFNPTSAKPGSLPPHVA). The chain crosses the membrane as a helical span at residues 71–91 (AAVNGVALCGTLAGQLFFGWL). Residues 92–99 (GDKLGRKK) are Cytoplasmic-facing. The chain crosses the membrane as a helical span at residues 100–120 (VYGITLIMMILCSVASGLSLG). The Extracellular segment spans residues 121–131 (NSAKGVMTTLC). The chain crosses the membrane as a helical span at residues 132–152 (FFRFWLGFGIGGDYPLSATIM). The Cytoplasmic portion of the chain corresponds to 153-161 (SEYANKKTR). Residues 162–182 (GAFIAAVFAMQGVGILAGGFV) traverse the membrane as a helical segment. Over 183 to 211 (ALAVSSIFDKKFPSPTYEQDRFLSTPPQA) the chain is Extracellular. The chain crosses the membrane as a helical span at residues 212–232 (DYIWRIIVMFGALPAALTYYW). Residues 233-292 (RMKMPETARYTALVAKNIKQATADMSKVLQTDLELEERVEDDVKDPKKNYGLFSKEFLRR) lie on the Cytoplasmic side of the membrane. The helical transmembrane segment at 293–313 (HGLHLLGTTSTWFLLDIAFYS) threads the bilayer. Residues 314 to 348 (QNLFQKDIFSAIGWIPKAATMNAIHEVFKIARAQT) lie on the Extracellular side of the membrane. The helical transmembrane segment at 349-369 (LIALCSTVPGYWFTVAFIDII) threads the bilayer. Topologically, residues 370 to 371 (GR) are cytoplasmic. The chain crosses the membrane as a helical span at residues 372-392 (FAIQLMGFFMMTVFMFAIAFP). The Extracellular segment spans residues 393–402 (YNHWILPDNR). The helical transmembrane segment at 403–423 (IGFVVMYSLTFFFANFGPNAT) threads the bilayer. Residues 424–441 (TFIVPAEIFPARLRSTCH) lie on the Cytoplasmic side of the membrane. Residues 442–462 (GISAATGKAGAIVGAFGFLYA) traverse the membrane as a helical segment. At 463 to 484 (AQPQDKTKTDAGYPPGIGVKNS) the chain is on the extracellular side. The chain crosses the membrane as a helical span at residues 485 to 505 (LIMLGVINFVGMLFTFLVPEP). Topologically, residues 506–521 (KGKSLEELSGEAEVDK) are cytoplasmic.

It belongs to the major facilitator superfamily. Phosphate:H(+) symporter (TC 2.A.1.9) family. Mainly expressed in roots, especially in the stele of the primary root, the pericycle and trichoblasts of secondary roots. To a lower extent, present in hydathodes and vascular tissues of young leaves.

Its subcellular location is the membrane. High-affinity transporter for external inorganic phosphate. This chain is Probable inorganic phosphate transporter 1-3 (PHT1-3), found in Arabidopsis thaliana (Mouse-ear cress).